The primary structure comprises 81 residues: MGHIITYCQVHTNISILIRKAHHIIFFVIDCDCISLQFSNYVHHGNRFRTVLISKTSIACFSDIKRILPCTFKIYSINDCP.

This is an uncharacterized protein from Vaccinia virus (strain Copenhagen) (VACV).